A 377-amino-acid polypeptide reads, in one-letter code: Nitric oxide reductase FlRd-NAD(+) reductase (377 aa).

This sequence belongs to the FAD-dependent oxidoreductase family. Requires FAD as cofactor.

Its subcellular location is the cytoplasm. The catalysed reaction is 2 reduced [nitric oxide reductase rubredoxin domain] + NAD(+) + H(+) = 2 oxidized [nitric oxide reductase rubredoxin domain] + NADH. It functions in the pathway nitrogen metabolism; nitric oxide reduction. Functionally, one of at least two accessory proteins for anaerobic nitric oxide (NO) reductase. Reduces the rubredoxin moiety of NO reductase. This is Nitric oxide reductase FlRd-NAD(+) reductase from Escherichia coli (strain SE11).